Reading from the N-terminus, the 100-residue chain is MLLSPHEQERLLIHVAAGLARERRARGLRLNHPEATALLTSFLLEGARDGRSVADLMTAGRGVLTRDDVMEGVPEMLAEVQVEATFPDGTKLVTVHQPIA.

Belongs to the urease gamma subunit family. In terms of assembly, heterotrimer of UreA (gamma), UreB (beta) and UreC (alpha) subunits. Three heterotrimers associate to form the active enzyme.

It localises to the cytoplasm. The catalysed reaction is urea + 2 H2O + H(+) = hydrogencarbonate + 2 NH4(+). Its pathway is nitrogen metabolism; urea degradation; CO(2) and NH(3) from urea (urease route): step 1/1. The protein is Urease subunit gamma of Frankia alni (strain DSM 45986 / CECT 9034 / ACN14a).